A 735-amino-acid polypeptide reads, in one-letter code: MENQNRQNASQCPFHGSITNQSSNRTTNKDWWPNQLNLSILHQHDRKTNPHDEEFDYAAEFQKLDYWALKEDLRKLMTESQDWWPADYGHYGPLFIRMAWHSAGTYRIGDGRGGASTGTQRFAPLNSWPDNANLDKARRLLWPIKKKYGNKISWADLFILAGNVAIESMGGKTIGFGGGRVDVWHPEEDIYWGAEKEWLASERHSDDGELEHPLAASVMGLIYVNPEGPDGKPDPKAAARDIRETFRRMGMNDEETVALIAGGHTFGKAHGAGPATHVGPEPEAAPIEAQGLGWMSSYGKGKGSDTITSGIEGAWTPTPTQWDMSYFDMLFGYDWWLTKSPAGAWQWMAVDPNEKDLAPDAEDPSKKVPTMMMTTDLALRFDPEYEKIARRFHQNPEEFAEAFARAWFKLTHRDMGPKTRYLGPEVPKEDFIWQDPIPEVNYELTEAEIEEIKAKILNSGLTVSELVKTAWASASTFRHSDKRGGANGARIRLAPQNEWEVNEPERLAKVLSIYEDIQRELPKKVSIADLIVLGGSAAVEKAARDAGFDVKVPFSPGRGDATQEQTDVESFAVLEPFADGFRNYQKQEYSVPPEELLVDKAQLLGLTAPEMTVLVGGLRVLGANYRDLPHGVFTDRIGVLTNDFFVNLLDMDYEWVPTDSGIYEIRNRKTGEVRWTATRVDLIFGSNSILRSYAEFYAQDDNQEKFVRDFINAWVKVMNADRFDLVKKARESVTA.

Over residues 1-26 the composition is skewed to polar residues; it reads MENQNRQNASQCPFHGSITNQSSNRT. Positions 1–29 are disordered; it reads MENQNRQNASQCPFHGSITNQSSNRTTNK. A cross-link (tryptophyl-tyrosyl-methioninium (Trp-Tyr) (with M-249)) is located at residues 100–223; sequence WHSAGTYRIG…LAASVMGLIY (124 aa). His101 serves as the catalytic Proton acceptor. The tryptophyl-tyrosyl-methioninium (Tyr-Met) (with W-100) cross-link spans 223–249; that stretch reads YVNPEGPDGKPDPKAAARDIRETFRRM. His264 contributes to the heme b binding site.

Belongs to the peroxidase family. Peroxidase/catalase subfamily. In terms of assembly, homodimer or homotetramer. The cofactor is heme b. Formation of the three residue Trp-Tyr-Met cross-link is important for the catalase, but not the peroxidase activity of the enzyme.

The catalysed reaction is H2O2 + AH2 = A + 2 H2O. It catalyses the reaction 2 H2O2 = O2 + 2 H2O. In terms of biological role, bifunctional enzyme with both catalase and broad-spectrum peroxidase activity. This Geobacillus thermodenitrificans (strain NG80-2) protein is Catalase-peroxidase.